A 98-amino-acid polypeptide reads, in one-letter code: NADH-ubiquinone oxidoreductase chain 4L (98 aa).

3 consecutive transmembrane segments (helical) span residues 1–21 (MSMV…GMLV), 29–49 (SLLC…VTIL), and 61–81 (IILL…LVMV).

The protein belongs to the complex I subunit 4L family. In terms of assembly, core subunit of respiratory chain NADH dehydrogenase (Complex I) which is composed of 45 different subunits.

It is found in the mitochondrion inner membrane. It carries out the reaction a ubiquinone + NADH + 5 H(+)(in) = a ubiquinol + NAD(+) + 4 H(+)(out). In terms of biological role, core subunit of the mitochondrial membrane respiratory chain NADH dehydrogenase (Complex I) which catalyzes electron transfer from NADH through the respiratory chain, using ubiquinone as an electron acceptor. Part of the enzyme membrane arm which is embedded in the lipid bilayer and involved in proton translocation. The chain is NADH-ubiquinone oxidoreductase chain 4L (MT-ND4L) from Odobenus rosmarus rosmarus (Atlantic walrus).